Reading from the N-terminus, the 159-residue chain is Urease subunit beta 2 (159 aa).

Residues 1-24 (MAKEPTKAAHPQPEQTKTNHKAHR) form a disordered region.

The protein belongs to the urease beta subunit family. In terms of assembly, heterotrimer of UreA (gamma), UreB (beta) and UreC (alpha) subunits. Three heterotrimers associate to form the active enzyme.

It is found in the cytoplasm. It carries out the reaction urea + 2 H2O + H(+) = hydrogencarbonate + 2 NH4(+). It functions in the pathway nitrogen metabolism; urea degradation; CO(2) and NH(3) from urea (urease route): step 1/1. Functionally, disrupting the ure2 operon has no effect on urease activity, or pathogen survival in BALB/c mice when inoculated by gavage, but confers slightly enhanced resistance to low pH killing in vitro. In Brucella suis biovar 1 (strain 1330), this protein is Urease subunit beta 2.